Here is a 335-residue protein sequence, read N- to C-terminus: Ketol-acid reductoisomerase (NAD(P)(+)) (335 aa).

The region spanning 5 to 185 (AKIYTDKDTT…GGTRAGAIET (181 aa)) is the KARI N-terminal Rossmann domain. NADP(+) is bound by residues 28 to 31 (YGSQ), R52, S56, and 86 to 89 (DMAQ). Residue H111 is part of the active site. G137 is a binding site for NADP(+). Residues 186 to 331 (TFKEETETDL…RRLKEIIERG (146 aa)) form the KARI C-terminal knotted domain. Residues D194, E198, E230, and E234 each coordinate Mg(2+). S255 provides a ligand contact to substrate. The interval 301 to 335 (GSPTLSKGLEEMDKSLEEQTGRRLKEIIERGRPKS) is disordered. Positions 308-335 (GLEEMDKSLEEQTGRRLKEIIERGRPKS) are enriched in basic and acidic residues.

It belongs to the ketol-acid reductoisomerase family. Mg(2+) serves as cofactor.

The enzyme catalyses (2R)-2,3-dihydroxy-3-methylbutanoate + NAD(+) = (2S)-2-acetolactate + NADH + H(+). The catalysed reaction is (2R)-2,3-dihydroxy-3-methylbutanoate + NADP(+) = (2S)-2-acetolactate + NADPH + H(+). It functions in the pathway amino-acid biosynthesis; L-isoleucine biosynthesis; L-isoleucine from 2-oxobutanoate: step 2/4. The protein operates within amino-acid biosynthesis; L-valine biosynthesis; L-valine from pyruvate: step 2/4. Functionally, involved in the biosynthesis of branched-chain amino acids (BCAA). Catalyzes an alkyl-migration followed by a ketol-acid reduction of (S)-2-acetolactate (S2AL) to yield (R)-2,3-dihydroxy-isovalerate. In the isomerase reaction, S2AL is rearranged via a Mg-dependent methyl migration to produce 3-hydroxy-3-methyl-2-ketobutyrate (HMKB). In the reductase reaction, this 2-ketoacid undergoes a metal-dependent reduction by NADPH or NADH to yield (R)-2,3-dihydroxy-isovalerate. In Metallosphaera sedula (strain ATCC 51363 / DSM 5348 / JCM 9185 / NBRC 15509 / TH2), this protein is Ketol-acid reductoisomerase (NAD(P)(+)).